Consider the following 284-residue polypeptide: Bifunctional protein FolD (284 aa).

NADP(+) is bound by residues 164-166 (GRG), Thr189, and Ile230.

The protein belongs to the tetrahydrofolate dehydrogenase/cyclohydrolase family. In terms of assembly, homodimer.

It carries out the reaction (6R)-5,10-methylene-5,6,7,8-tetrahydrofolate + NADP(+) = (6R)-5,10-methenyltetrahydrofolate + NADPH. It catalyses the reaction (6R)-5,10-methenyltetrahydrofolate + H2O = (6R)-10-formyltetrahydrofolate + H(+). Its pathway is one-carbon metabolism; tetrahydrofolate interconversion. Its function is as follows. Catalyzes the oxidation of 5,10-methylenetetrahydrofolate to 5,10-methenyltetrahydrofolate and then the hydrolysis of 5,10-methenyltetrahydrofolate to 10-formyltetrahydrofolate. The sequence is that of Bifunctional protein FolD from Pelotomaculum thermopropionicum (strain DSM 13744 / JCM 10971 / SI).